A 764-amino-acid chain; its full sequence is PFL-like enzyme TdcE (764 aa).

Residues 7 to 629 (TSDKLYADAW…KTGNTPDGRR (623 aa)) enclose the PFL domain. Cysteine 423 (S-acetylcysteine intermediate) is an active-site residue. Cysteine 424 functions as the Cysteine radical intermediate in the catalytic mechanism. The disordered stretch occupies residues 622–645 (GNTPDGRRAGTPFAPGANPMHGRD). Residues 636–764 (PGANPMHGRD…VISRTFTQAL (129 aa)) enclose the Glycine radical domain. Glycine 739 is modified (glycine radical).

Belongs to the glycyl radical enzyme (GRE) family. PFL subfamily.

It localises to the cytoplasm. It carries out the reaction 2-oxobutanoate + CoA = propanoyl-CoA + formate. The catalysed reaction is formate + acetyl-CoA = pyruvate + CoA. Its pathway is amino-acid degradation; L-threonine degradation via propanoate pathway; propanoate from L-threonine: step 2/4. With respect to regulation, dependent on PFL-activase. Functionally, catalyzes the cleavage of 2-ketobutyrate to propionyl-CoA and formate. It can also use pyruvate as substrate. This chain is PFL-like enzyme TdcE (tdcE), found in Escherichia coli (strain K12).